Here is a 224-residue protein sequence, read N- to C-terminus: Proteasome subunit beta (224 aa).

Residues M1–G6 constitute a propeptide, removed in mature form; by autocatalysis. The active-site Nucleophile is the T7.

It belongs to the peptidase T1B family. As to quaternary structure, the 20S proteasome core is composed of 14 alpha and 14 beta subunits that assemble into four stacked heptameric rings, resulting in a barrel-shaped structure. The two inner rings, each composed of seven catalytic beta subunits, are sandwiched by two outer rings, each composed of seven alpha subunits. The catalytic chamber with the active sites is on the inside of the barrel. Has a gated structure, the ends of the cylinder being occluded by the N-termini of the alpha-subunits. Is capped at one or both ends by the proteasome regulatory ATPase, PAN.

Its subcellular location is the cytoplasm. The catalysed reaction is Cleavage of peptide bonds with very broad specificity.. Its activity is regulated as follows. The formation of the proteasomal ATPase PAN-20S proteasome complex, via the docking of the C-termini of PAN into the intersubunit pockets in the alpha-rings, triggers opening of the gate for substrate entry. Interconversion between the open-gate and close-gate conformations leads to a dynamic regulation of the 20S proteasome proteolysis activity. In terms of biological role, component of the proteasome core, a large protease complex with broad specificity involved in protein degradation. The M.jannaschii proteasome is able to cleave oligopeptides after Glu, Asp, Tyr, Phe, Trp, slightly after Arg, but not after Ala. Thus, displays caspase-like and chymotrypsin-like activities and low level of trypsin-like activity. The polypeptide is Proteasome subunit beta (Methanocaldococcus jannaschii (strain ATCC 43067 / DSM 2661 / JAL-1 / JCM 10045 / NBRC 100440) (Methanococcus jannaschii)).